The sequence spans 169 residues: 2-C-methyl-D-erythritol 2,4-cyclodiphosphate synthase (169 aa).

The a divalent metal cation site is built by Asp-13 and His-15. 4-CDP-2-C-methyl-D-erythritol 2-phosphate-binding positions include 13–15 (DVH) and 39–40 (HS). Residue His-47 coordinates a divalent metal cation. Residues 61–63 (DIG), 66–70 (FPDTD), Phe-144, and Arg-147 contribute to the 4-CDP-2-C-methyl-D-erythritol 2-phosphate site.

The protein belongs to the IspF family. In terms of assembly, homotrimer. The cofactor is a divalent metal cation.

The enzyme catalyses 4-CDP-2-C-methyl-D-erythritol 2-phosphate = 2-C-methyl-D-erythritol 2,4-cyclic diphosphate + CMP. It functions in the pathway isoprenoid biosynthesis; isopentenyl diphosphate biosynthesis via DXP pathway; isopentenyl diphosphate from 1-deoxy-D-xylulose 5-phosphate: step 4/6. Involved in the biosynthesis of isopentenyl diphosphate (IPP) and dimethylallyl diphosphate (DMAPP), two major building blocks of isoprenoid compounds. Catalyzes the conversion of 4-diphosphocytidyl-2-C-methyl-D-erythritol 2-phosphate (CDP-ME2P) to 2-C-methyl-D-erythritol 2,4-cyclodiphosphate (ME-CPP) with a corresponding release of cytidine 5-monophosphate (CMP). In Cupriavidus necator (strain ATCC 17699 / DSM 428 / KCTC 22496 / NCIMB 10442 / H16 / Stanier 337) (Ralstonia eutropha), this protein is 2-C-methyl-D-erythritol 2,4-cyclodiphosphate synthase.